A 234-amino-acid polypeptide reads, in one-letter code: Alpha N-terminal protein methyltransferase 1 (234 aa).

Residues G71, R76, 93–95, 120–121, and Q136 each bind S-adenosyl-L-methionine; these read DVV and LQ.

Belongs to the methyltransferase superfamily. NTM1 family. In terms of tissue distribution, expressed in uterine cells and PVT neurons of the tail. Expressed in pharynx, intestine and DVB tail neuron.

The catalysed reaction is N-terminal L-alanyl-L-prolyl-L-lysyl-[protein] + 3 S-adenosyl-L-methionine = N-terminal N,N,N-trimethyl-L-alanyl-L-prolyl-L-lysyl-[protein] + 3 S-adenosyl-L-homocysteine + 3 H(+). The enzyme catalyses N-terminal L-seryl-L-prolyl-L-lysyl-[protein] + 3 S-adenosyl-L-methionine = N-terminal N,N,N-trimethyl-L-seryl-L-prolyl-L-lysyl-[protein] + 3 S-adenosyl-L-homocysteine + 3 H(+). It catalyses the reaction N-terminal L-prolyl-L-prolyl-L-lysyl-[protein] + 2 S-adenosyl-L-methionine = N-terminal N,N-dimethyl-L-prolyl-L-prolyl-L-lysyl-[protein] + 2 S-adenosyl-L-homocysteine + 2 H(+). Its function is as follows. Alpha-N-methyltransferase that methylates the N-terminus of target proteins containing the N-terminal motif [Ala/Pro/Ser]-Pro-Lys when the initiator Met is cleaved. Specifically catalyzes mono-, di- or tri-methylation of exposed alpha-amino group of Ala or Ser residue in the [Ala/Ser]-Pro-Lys motif and mono- or di-methylation of Pro in the Pro-Pro-Lys motif. Probably required for the synthesis of neurotransmitter melatonin from serotonin, which plays a role in promoting a sleep-like state, called lethargus, during larval development. The sequence is that of Alpha N-terminal protein methyltransferase 1 from Caenorhabditis elegans.